A 605-amino-acid polypeptide reads, in one-letter code: Glycerophosphodiester phosphodiesterase domain-containing protein 5 (605 aa).

The Cytoplasmic segment spans residues methionine 1–arginine 42. 2 disulfides stabilise this stretch: cysteine 15/cysteine 18 and cysteine 25/cysteine 571. A helical transmembrane segment spans residues leucine 43 to tryptophan 63. Over glutamate 64–proline 89 the chain is Extracellular. The chain crosses the membrane as a helical span at residues isoleucine 90–cysteine 110. Residues histidine 111–lysine 125 are Cytoplasmic-facing. The chain crosses the membrane as a helical span at residues isoleucine 126–tryptophan 146. Residues glutamate 147–threonine 160 are Extracellular-facing. Residues alanine 161–glycine 181 form a helical membrane-spanning segment. At glutamine 182–glutamine 192 the chain is on the cytoplasmic side. A helical membrane pass occupies residues valine 193 to isoleucine 213. At serine 214–tyrosine 496 the chain is on the extracellular side. The 258-residue stretch at proline 228 to proline 485 folds into the GP-PDE domain. 5 N-linked (GlcNAc...) asparagine glycosylation sites follow: asparagine 301, asparagine 336, asparagine 352, asparagine 374, and asparagine 448. A helical transmembrane segment spans residues cysteine 497–leucine 517. Residues glutamine 518 to arginine 605 are Cytoplasmic-facing. The segment at serine 582–arginine 605 is disordered.

The protein belongs to the glycerophosphoryl diester phosphodiesterase family. As to quaternary structure, interacts with PRDX1; forms a mixed-disulfide with PRDX1, leading to disrupt intramolecular disulfide bond between Cys-25 and Cys-571. Intramolecular disulfide bond between Cys-25 and Cys-571 is reduced by PRDX1.

The protein localises to the endomembrane system. Its subcellular location is the cytoplasm. It is found in the perinuclear region. It localises to the cell projection. The protein resides in the growth cone. It carries out the reaction a 1,2-diacyl-sn-glycero-3-phospho-(1D-myo-inositol-4,5-bisphosphate) + H2O = 1D-myo-inositol 1,4,5-trisphosphate + a 1,2-diacyl-sn-glycerol + H(+). The catalysed reaction is sn-glycerol 3-phosphocholine + H2O = sn-glycerol 3-phosphate + choline + H(+). In terms of biological role, glycerophosphodiester phosphodiesterase that promotes neurite formation and drives spinal motor neuron differentiation. Mediates the cleavage of glycosylphosphatidylinositol (GPI) anchor of target proteins: removes the GPI-anchor of RECK, leading to release RECK from the plasma membrane. May contribute to the osmotic regulation of cellular glycerophosphocholine. In Homo sapiens (Human), this protein is Glycerophosphodiester phosphodiesterase domain-containing protein 5.